The sequence spans 549 residues: Nucleoporin nup61 (549 aa).

Residues 1–32 (MSKRGADHQLTKDQDDSDDDRHGPVEVPKEAS) show a composition bias toward basic and acidic residues. 3 disordered regions span residues 1–57 (MSKR…VSSP), 133–193 (IEKK…GFSA), and 207–438 (FTPK…NEDS). Ser-17 is subject to Phosphoserine. Positions 40 to 50 (KIAKPKSRKRP) are enriched in basic residues. Positions 141–165 (QPTSNAVVSEVNPQQQKSQDSSSFV) are enriched in polar residues. Basic and acidic residues-rich tracts occupy residues 170–180 (ASSEKEDKEKP) and 217–228 (SATEAEAKEKET). Low complexity predominate over residues 229 to 244 (SSNQTATGTAATTTNQ). 2 stretches are compositionally biased toward basic and acidic residues: residues 282-310 (ASKE…KSEN) and 328-339 (KPIKFDTPEKKF). Ser-347 is subject to Phosphoserine. The span at 407–421 (SEQEEKENGNDETRS) shows a compositional bias: basic and acidic residues. In terms of domain architecture, RanBD1 spans 416–549 (NDETRSNDSL…NEKKVSKSEN (134 aa)).

The protein resides in the nucleus. The protein localises to the nuclear pore complex. Functionally, functions as a component of the nuclear pore complex (NPC). NPC components, collectively referred to as nucleoporins (NUPs), can play the role of both NPC structural components and of docking or interaction partners for transiently associated nuclear transport factors. Active directional transport is assured by both, a Phe-Gly (FG) repeat affinity gradient for these transport factors across the NPC and a transport cofactor concentration gradient across the nuclear envelope. May play a role in mitotic spindle formation and/or function. The chain is Nucleoporin nup61 (nup61) from Schizosaccharomyces pombe (strain 972 / ATCC 24843) (Fission yeast).